A 68-amino-acid polypeptide reads, in one-letter code: DNA-directed RNA polymerase subunit Rpo10 (68 aa).

Residues cysteine 7, cysteine 10, cysteine 44, and cysteine 45 each coordinate Zn(2+).

The protein belongs to the archaeal Rpo10/eukaryotic RPB10 RNA polymerase subunit family. Part of the RNA polymerase complex. It depends on Zn(2+) as a cofactor.

The protein resides in the cytoplasm. The enzyme catalyses RNA(n) + a ribonucleoside 5'-triphosphate = RNA(n+1) + diphosphate. Functionally, DNA-dependent RNA polymerase (RNAP) catalyzes the transcription of DNA into RNA using the four ribonucleoside triphosphates as substrates. This Methanococcus maripaludis (strain C5 / ATCC BAA-1333) protein is DNA-directed RNA polymerase subunit Rpo10.